A 546-amino-acid polypeptide reads, in one-letter code: 2-isopropylmalate synthase (546 aa).

The Pyruvate carboxyltransferase domain occupies I8–S271. 4 residues coordinate Mn(2+): D17, H208, H210, and N244. The tract at residues Q408 to N546 is regulatory domain.

Belongs to the alpha-IPM synthase/homocitrate synthase family. LeuA type 1 subfamily. In terms of assembly, homodimer. Mn(2+) is required as a cofactor.

It localises to the cytoplasm. The catalysed reaction is 3-methyl-2-oxobutanoate + acetyl-CoA + H2O = (2S)-2-isopropylmalate + CoA + H(+). It participates in amino-acid biosynthesis; L-leucine biosynthesis; L-leucine from 3-methyl-2-oxobutanoate: step 1/4. Catalyzes the condensation of the acetyl group of acetyl-CoA with 3-methyl-2-oxobutanoate (2-ketoisovalerate) to form 3-carboxy-3-hydroxy-4-methylpentanoate (2-isopropylmalate). This chain is 2-isopropylmalate synthase, found in Prochlorococcus marinus (strain MIT 9312).